The following is an 88-amino-acid chain: Small ribosomal subunit protein bS16 (88 aa).

It belongs to the bacterial ribosomal protein bS16 family.

The chain is Small ribosomal subunit protein bS16 from Syntrophomonas wolfei subsp. wolfei (strain DSM 2245B / Goettingen).